A 150-amino-acid chain; its full sequence is 3-hydroxyacyl-[acyl-carrier-protein] dehydratase FabZ (150 aa).

His-52 is an active-site residue.

This sequence belongs to the thioester dehydratase family. FabZ subfamily.

It localises to the cytoplasm. The enzyme catalyses a (3R)-hydroxyacyl-[ACP] = a (2E)-enoyl-[ACP] + H2O. In terms of biological role, involved in unsaturated fatty acids biosynthesis. Catalyzes the dehydration of short chain beta-hydroxyacyl-ACPs and long chain saturated and unsaturated beta-hydroxyacyl-ACPs. The chain is 3-hydroxyacyl-[acyl-carrier-protein] dehydratase FabZ from Cupriavidus metallidurans (strain ATCC 43123 / DSM 2839 / NBRC 102507 / CH34) (Ralstonia metallidurans).